A 270-amino-acid chain; its full sequence is NAD(P)H-hydrate epimerase (270 aa).

The YjeF N-terminal domain occupies 25 to 234 (FQQLMDLMQN…DLLAPEAIYQ (210 aa)). 73 to 77 (DNGGQ) is a binding site for (6S)-NADPHX. Asparagine 74 and aspartate 144 together coordinate K(+). (6S)-NADPHX is bound by residues 148 to 154 (GVGLYGH) and glutamate 177. Threonine 180 contributes to the K(+) binding site.

Belongs to the NnrE/AIBP family. Requires K(+) as cofactor.

The enzyme catalyses (6R)-NADHX = (6S)-NADHX. The catalysed reaction is (6R)-NADPHX = (6S)-NADPHX. In terms of biological role, catalyzes the epimerization of the S- and R-forms of NAD(P)HX, a damaged form of NAD(P)H that is a result of enzymatic or heat-dependent hydration. This is a prerequisite for the S-specific NAD(P)H-hydrate dehydratase to allow the repair of both epimers of NAD(P)HX. The chain is NAD(P)H-hydrate epimerase from Legionella pneumophila serogroup 1 (strain 2300/99 Alcoy).